We begin with the raw amino-acid sequence, 485 residues long: Protein nucleotidyltransferase YdiU (485 aa).

The ATP site is built by glycine 90, glycine 92, arginine 93, lysine 113, aspartate 125, glycine 126, arginine 176, and arginine 183. Aspartate 252 functions as the Proton acceptor in the catalytic mechanism. Mg(2+)-binding residues include asparagine 253 and aspartate 262. Aspartate 262 serves as a coordination point for ATP.

This sequence belongs to the SELO family. The cofactor is Mg(2+). It depends on Mn(2+) as a cofactor.

The enzyme catalyses L-seryl-[protein] + ATP = 3-O-(5'-adenylyl)-L-seryl-[protein] + diphosphate. It carries out the reaction L-threonyl-[protein] + ATP = 3-O-(5'-adenylyl)-L-threonyl-[protein] + diphosphate. The catalysed reaction is L-tyrosyl-[protein] + ATP = O-(5'-adenylyl)-L-tyrosyl-[protein] + diphosphate. It catalyses the reaction L-histidyl-[protein] + UTP = N(tele)-(5'-uridylyl)-L-histidyl-[protein] + diphosphate. The enzyme catalyses L-seryl-[protein] + UTP = O-(5'-uridylyl)-L-seryl-[protein] + diphosphate. It carries out the reaction L-tyrosyl-[protein] + UTP = O-(5'-uridylyl)-L-tyrosyl-[protein] + diphosphate. Its function is as follows. Nucleotidyltransferase involved in the post-translational modification of proteins. It can catalyze the addition of adenosine monophosphate (AMP) or uridine monophosphate (UMP) to a protein, resulting in modifications known as AMPylation and UMPylation. The sequence is that of Protein nucleotidyltransferase YdiU from Aliivibrio fischeri (strain ATCC 700601 / ES114) (Vibrio fischeri).